We begin with the raw amino-acid sequence, 271 residues long: Inactive phospholipid phosphatase 7 (271 aa).

The interval 1 to 66 (MPASQSRARA…RERRQSQQLP (66 aa)) is disordered. At 1–112 (MPASQSRARA…AASWASARSM (112 aa)) the chain is on the cytoplasmic side. S43 and S62 each carry phosphoserine. Positions 70 to 91 (CMQLNPSFKGIAFNSLLAIDIC) are interaction with MTOR. A helical transmembrane segment spans residues 113 to 133 (VKLIGITGHGIPWIGGTILCL). Residues 134-141 (VKSSTLAG) are Extracellular-facing. The chain crosses the membrane as a helical span at residues 142–162 (QEVLMNLLLALLLDIMTVAGV). Residues 163-202 (QKLIKRRGPYETSPSLLDYLTMDIYAFPAGHASRAAMVSK) are Cytoplasmic-facing. Residues 203–223 (FFLSHLVLAVPLRVLLVLWAL) traverse the membrane as a helical segment. The Extracellular segment spans residues 224–239 (CVGLSRVMIGRHHVTD). The chain crosses the membrane as a helical span at residues 240–260 (VLSGFVIGYLQFRLVELVWMP). Topologically, residues 261–271 (SSTCQMLISAW) are cytoplasmic.

It belongs to the PA-phosphatase related phosphoesterase family. Homo and heterooligomer. Interacts with MTOR; controls MTOR-dependent IGF2 expression during myoblast differentiation.

It is found in the nucleus envelope. The protein resides in the endoplasmic reticulum membrane. It localises to the membrane. Plays a role as negative regulator of myoblast differentiation, in part through effects on MTOR signaling. Has no detectable enzymatic activity. This is Inactive phospholipid phosphatase 7 from Homo sapiens (Human).